A 313-amino-acid polypeptide reads, in one-letter code: NNQLALKLAATGGSTNSLPALALQNLLNTWEDTSCCSQTSPGQQSWPRDGAQDGLYTLSTADGEIYQTFCDMSTHGGGWTLVASVHENNAHGKCTVGDRWSSQQGNSPLYPEGDGNWANNNIFGSAMGSTSDDYKNPGYYDLQAGDLSVWHVPDRAPLRKEMIESSVLLFYRTGFLSSEGGNLLRLYEKYPVKYGAGSCKVDNGPAVPIVYDFGSAEKTAAYYSPSGRGEFTAGFVQFRVFNNEKAPMALCSGLKVTGCNTEHHCIGGGGFFPEGNPRQCGDFPAFDWDGYGTHQSWSTSREMIESSVLLFYR.

Residues 33-251 (TSCCSQTSPG…NNEKAPMALC (219 aa)) form the Fibrinogen C-terminal domain. His-86, Glu-87, Asn-89, Gly-92, Gly-97, Asp-98, and Asp-133 together coordinate Ca(2+). 3 disulfide bridges follow: Cys-94–Cys-280, Cys-199–Cys-259, and Cys-251–Cys-265. Residues Asn-260, Glu-262, Glu-274, and Asp-282 each coordinate Ca(2+). A carbohydrate is bound by residues 262–263 (EH) and Glu-274.

As to quaternary structure, monomer, homodimer, homotrimer and homotetramer. Mostly monomeric or dimeric.

The protein resides in the secreted. Binds mannan, mannose and, to a lesser degree, D-lactose, N-acetylgalactosamine, N-acetylglucosamine and beta-D-glucose. The polypeptide is Intelectin-like protein (Alligator mississippiensis (American alligator)).